The sequence spans 194 residues: 3-isopropylmalate dehydratase small subunit (194 aa).

It belongs to the LeuD family. LeuD type 1 subfamily. Heterodimer of LeuC and LeuD.

The catalysed reaction is (2R,3S)-3-isopropylmalate = (2S)-2-isopropylmalate. The protein operates within amino-acid biosynthesis; L-leucine biosynthesis; L-leucine from 3-methyl-2-oxobutanoate: step 2/4. Its function is as follows. Catalyzes the isomerization between 2-isopropylmalate and 3-isopropylmalate, via the formation of 2-isopropylmaleate. The protein is 3-isopropylmalate dehydratase small subunit of Halalkalibacterium halodurans (strain ATCC BAA-125 / DSM 18197 / FERM 7344 / JCM 9153 / C-125) (Bacillus halodurans).